Here is a 334-residue protein sequence, read N- to C-terminus: GTP 3',8-cyclase (334 aa).

The Radical SAM core domain occupies Arg13–Ala239. A GTP-binding site is contributed by Arg22. Cys29 and Cys33 together coordinate [4Fe-4S] cluster. Residue Tyr35 coordinates S-adenosyl-L-methionine. Cys36 contributes to the [4Fe-4S] cluster binding site. Position 73 (Arg73) interacts with GTP. Position 77 (Gly77) interacts with S-adenosyl-L-methionine. Thr104 lines the GTP pocket. Residue Ser128 participates in S-adenosyl-L-methionine binding. A GTP-binding site is contributed by Lys165. Met199 provides a ligand contact to S-adenosyl-L-methionine. [4Fe-4S] cluster-binding residues include Cys262 and Cys265. Residue Arg267 to Arg269 coordinates GTP. Cys279 provides a ligand contact to [4Fe-4S] cluster.

Belongs to the radical SAM superfamily. MoaA family. Monomer and homodimer. It depends on [4Fe-4S] cluster as a cofactor.

The enzyme catalyses GTP + AH2 + S-adenosyl-L-methionine = (8S)-3',8-cyclo-7,8-dihydroguanosine 5'-triphosphate + 5'-deoxyadenosine + L-methionine + A + H(+). Its pathway is cofactor biosynthesis; molybdopterin biosynthesis. Its function is as follows. Catalyzes the cyclization of GTP to (8S)-3',8-cyclo-7,8-dihydroguanosine 5'-triphosphate. The sequence is that of GTP 3',8-cyclase from Vibrio cholerae serotype O1 (strain M66-2).